The chain runs to 298 residues: 3-hydroxyisobutyrate dehydrogenase (298 aa).

Residues 2–30, 65–66, and threonine 96 each bind NAD(+); these read TDIAFLGLGNMGGPMAANLLKAGHRVNVF and LP. Lysine 171 is a catalytic residue. Lysine 246 contributes to the NAD(+) binding site.

This sequence belongs to the HIBADH-related family.

It catalyses the reaction 3-hydroxy-2-methylpropanoate + NAD(+) = 2-methyl-3-oxopropanoate + NADH + H(+). Its pathway is amino-acid degradation; L-valine degradation. The polypeptide is 3-hydroxyisobutyrate dehydrogenase (Pseudomonas aeruginosa (strain ATCC 15692 / DSM 22644 / CIP 104116 / JCM 14847 / LMG 12228 / 1C / PRS 101 / PAO1)).